The sequence spans 310 residues: Ribosomal protein uL3 glutamine methyltransferase (310 aa).

Belongs to the protein N5-glutamine methyltransferase family. PrmB subfamily.

The catalysed reaction is L-glutaminyl-[ribosomal protein uL3] + S-adenosyl-L-methionine = N(5)-methyl-L-glutaminyl-[ribosomal protein uL3] + S-adenosyl-L-homocysteine + H(+). Functionally, methylates large ribosomal subunit protein uL3 on a specific glutamine residue. The protein is Ribosomal protein uL3 glutamine methyltransferase of Yersinia pestis.